The following is a 257-amino-acid chain: BTB/POZ domain-containing protein KCTD1 (257 aa).

The tract at residues 1–25 (MSRPLITRSPASPLNNQGIPTPAQL) is disordered. Phosphoserine occurs at positions 9 and 12. Polar residues predominate over residues 9 to 25 (SPASPLNNQGIPTPAQL). A BTB domain is found at 30–100 (APVHIDVGGH…LRTSKLLIPD (71 aa)).

Forms homopentamers. Interacts with KCTD15, probably forming heteropentamers depending on its abundance in a cell-type dependent manner. Interacts with TFAP2A, TFAP2B and TFAP2C via the BTB domain. In terms of processing, sumoylated.

Its subcellular location is the nucleus. May repress the transcriptional activity of AP-2 family members, including TFAP2A, TFAP2B and TFAP2C to various extent. In Rattus norvegicus (Rat), this protein is BTB/POZ domain-containing protein KCTD1 (Kctd1).